The sequence spans 320 residues: Mitochondrial glycine transporter (320 aa).

Solcar repeat units follow at residues 8–92 (SKTT…LRQG), 121–205 (LSNW…LKRR), and 223–307 (SSSS…LILR). 6 consecutive transmembrane segments (helical) span residues 14–39 (FAAGLCSGLTSSILLQPADLLKTRVQ), 67–93 (GTLPSALRTGFGSALYFTSLNALRQGL), 127–152 (LATGAVARTAAGFVMMPVTVLKVRYE), 180–203 (GFGATAARDAPYAGLYVLFYEQLK), 227–253 (INFVSGGLAAGLATAITNPFDAVKTRL), and 282–300 (GLGLRITRKALSSALAWTV).

The protein belongs to the mitochondrial carrier (TC 2.A.29) family. SLC25A38 subfamily.

The protein resides in the mitochondrion inner membrane. The catalysed reaction is glycine(in) = glycine(out). In terms of biological role, mitochondrial glycine transporter that imports glycine into the mitochondrial matrix. Plays an important role in providing glycine for the first enzymatic step in heme biosynthesis, the condensation of glycine with succinyl-CoA to produce 5-aminolevulinate (ALA) in the mitochondrial matrix. This Aspergillus fumigatus (strain CBS 144.89 / FGSC A1163 / CEA10) (Neosartorya fumigata) protein is Mitochondrial glycine transporter.